A 156-amino-acid polypeptide reads, in one-letter code: 6,7-dimethyl-8-ribityllumazine synthase (156 aa).

Residues Phe-22, Ala-57–Glu-59, and Thr-81–Ile-83 each bind 5-amino-6-(D-ribitylamino)uracil. (2S)-2-hydroxy-3-oxobutyl phosphate is bound at residue Gly-86 to Thr-87. His-89 (proton donor) is an active-site residue. Residue Phe-114 coordinates 5-amino-6-(D-ribitylamino)uracil. Arg-128 is a binding site for (2S)-2-hydroxy-3-oxobutyl phosphate.

The protein belongs to the DMRL synthase family. As to quaternary structure, forms an icosahedral capsid composed of 60 subunits, arranged as a dodecamer of pentamers.

It catalyses the reaction (2S)-2-hydroxy-3-oxobutyl phosphate + 5-amino-6-(D-ribitylamino)uracil = 6,7-dimethyl-8-(1-D-ribityl)lumazine + phosphate + 2 H2O + H(+). Its pathway is cofactor biosynthesis; riboflavin biosynthesis; riboflavin from 2-hydroxy-3-oxobutyl phosphate and 5-amino-6-(D-ribitylamino)uracil: step 1/2. In terms of biological role, catalyzes the formation of 6,7-dimethyl-8-ribityllumazine by condensation of 5-amino-6-(D-ribitylamino)uracil with 3,4-dihydroxy-2-butanone 4-phosphate. This is the penultimate step in the biosynthesis of riboflavin. This chain is 6,7-dimethyl-8-ribityllumazine synthase, found in Salmonella agona (strain SL483).